A 152-amino-acid polypeptide reads, in one-letter code: 3-hydroxyacyl-[acyl-carrier-protein] dehydratase FabZ (152 aa).

Histidine 58 is an active-site residue.

This sequence belongs to the thioester dehydratase family. FabZ subfamily.

Its subcellular location is the cytoplasm. The enzyme catalyses a (3R)-hydroxyacyl-[ACP] = a (2E)-enoyl-[ACP] + H2O. Functionally, involved in unsaturated fatty acids biosynthesis. Catalyzes the dehydration of short chain beta-hydroxyacyl-ACPs and long chain saturated and unsaturated beta-hydroxyacyl-ACPs. The sequence is that of 3-hydroxyacyl-[acyl-carrier-protein] dehydratase FabZ from Synechococcus sp. (strain RCC307).